The chain runs to 880 residues: Valine--tRNA ligase (880 aa).

The 'HIGH' region signature appears at 48–58 (PNITGKLHLGH). A 'KMSKS' region motif is present at residues 527–531 (KMSKS). Lys530 provides a ligand contact to ATP. Coiled-coil stretches lie at residues 717–741 (KEEL…AIRN) and 810–880 (LFDL…KSLK).

This sequence belongs to the class-I aminoacyl-tRNA synthetase family. ValS type 1 subfamily. Monomer.

The protein resides in the cytoplasm. The catalysed reaction is tRNA(Val) + L-valine + ATP = L-valyl-tRNA(Val) + AMP + diphosphate. In terms of biological role, catalyzes the attachment of valine to tRNA(Val). As ValRS can inadvertently accommodate and process structurally similar amino acids such as threonine, to avoid such errors, it has a 'posttransfer' editing activity that hydrolyzes mischarged Thr-tRNA(Val) in a tRNA-dependent manner. This chain is Valine--tRNA ligase, found in Clostridium tetani (strain Massachusetts / E88).